Reading from the N-terminus, the 63-residue chain is Large ribosomal subunit protein uL29 (63 aa).

This sequence belongs to the universal ribosomal protein uL29 family.

The sequence is that of Large ribosomal subunit protein uL29 from Enterobacter sp. (strain 638).